The sequence spans 256 residues: Biosynthetic peptidoglycan transglycosylase (256 aa).

A helical transmembrane segment spans residues valine 26–tyrosine 48.

Belongs to the glycosyltransferase 51 family.

The protein resides in the cell inner membrane. It catalyses the reaction [GlcNAc-(1-&gt;4)-Mur2Ac(oyl-L-Ala-gamma-D-Glu-L-Lys-D-Ala-D-Ala)](n)-di-trans,octa-cis-undecaprenyl diphosphate + beta-D-GlcNAc-(1-&gt;4)-Mur2Ac(oyl-L-Ala-gamma-D-Glu-L-Lys-D-Ala-D-Ala)-di-trans,octa-cis-undecaprenyl diphosphate = [GlcNAc-(1-&gt;4)-Mur2Ac(oyl-L-Ala-gamma-D-Glu-L-Lys-D-Ala-D-Ala)](n+1)-di-trans,octa-cis-undecaprenyl diphosphate + di-trans,octa-cis-undecaprenyl diphosphate + H(+). Its pathway is cell wall biogenesis; peptidoglycan biosynthesis. Peptidoglycan polymerase that catalyzes glycan chain elongation from lipid-linked precursors. This Burkholderia pseudomallei (strain K96243) protein is Biosynthetic peptidoglycan transglycosylase.